The following is a 116-amino-acid chain: Biogenesis of lysosome-related organelles complex 1 subunit CNL1 (116 aa).

Positions 63–95 (DIVDVNIQSFKDILSKCEELENYFTMLDQIEMI) form a coiled coil.

This sequence belongs to the BLOC1S4 family. Component of the biogenesis of lysosome-related organelles complex-1 (BLOC-1).

The protein localises to the cytoplasm. Functionally, component of the biogenesis of lysosome-related organelles complex-1 (BLOC-1), a complex that is involved in endosomal cargo sorting. This Vanderwaltozyma polyspora (strain ATCC 22028 / DSM 70294 / BCRC 21397 / CBS 2163 / NBRC 10782 / NRRL Y-8283 / UCD 57-17) (Kluyveromyces polysporus) protein is Biogenesis of lysosome-related organelles complex 1 subunit CNL1 (CLN1).